Here is a 31-residue protein sequence, read N- to C-terminus: Cytochrome b6-f complex subunit 6 (31 aa).

A helical membrane pass occupies residues 4–24 (LLSYFGFLFAILTLTSVLFIG).

Belongs to the PetL family. As to quaternary structure, the 4 large subunits of the cytochrome b6-f complex are cytochrome b6, subunit IV (17 kDa polypeptide, PetD), cytochrome f and the Rieske protein, while the 4 small subunits are PetG, PetL, PetM and PetN. The complex functions as a dimer.

It is found in the plastid. The protein localises to the chloroplast thylakoid membrane. Component of the cytochrome b6-f complex, which mediates electron transfer between photosystem II (PSII) and photosystem I (PSI), cyclic electron flow around PSI, and state transitions. PetL is important for photoautotrophic growth as well as for electron transfer efficiency and stability of the cytochrome b6-f complex. The protein is Cytochrome b6-f complex subunit 6 of Angiopteris evecta (Mule's foot fern).